A 287-amino-acid polypeptide reads, in one-letter code: Inactive phospholipid phosphatase 7 (287 aa).

Residues 1–75 (MPANQTRSRA…NNKDKKELPE (75 aa)) are disordered. At 1–120 (MPANQTRSRA…SSSWGSVRSM (120 aa)) the chain is on the cytoplasmic side. A compositionally biased stretch (gly residues) spans 31–40 (SGGGGGGGES). Residues 49–65 (QRQQQNQQQQGDNPQPE) show a composition bias toward low complexity. The chain crosses the membrane as a helical span at residues 121–141 (VKLLALTGHGIPWVFGTIVCL). Residues 142–146 (MRSNT) lie on the Extracellular side of the membrane. Residues 147-167 (LAGQEVLVNLLLALLLDVMTV) traverse the membrane as a helical segment. Residues 168–215 (SGMQKLVKRKGPWEMPPGFFDYLAMDIYSFPAAHASRAVMVSKFLLAH) lie on the Cytoplasmic side of the membrane. The helical transmembrane segment at 216–236 (LVLAVPLRILLVLWAILVGIS) threads the bilayer. Residues 237–247 (RVLLGRHHLTD) are Extracellular-facing. A helical membrane pass occupies residues 248-268 (VGCGFALGFLHYSLVEMVWLS). Residues 269–287 (SNTCQTLISIGTFNWSPLY) lie on the Cytoplasmic side of the membrane.

The protein belongs to the PA-phosphatase related phosphoesterase family.

The protein localises to the nucleus envelope. It localises to the endoplasmic reticulum membrane. Its subcellular location is the membrane. In terms of biological role, plays a role as negative regulator of myoblast differentiation, in part through effects on MTOR signaling. Has no detectable enzymatic activity. The sequence is that of Inactive phospholipid phosphatase 7 from Danio rerio (Zebrafish).